Here is an 898-residue protein sequence, read N- to C-terminus: Zinc finger protein 574 (898 aa).

3 C2H2-type zinc fingers span residues 16–38, 76–98, and 126–148; these read YVCS…QNSH, YQCL…QELH, and YECV…RQTH. Phosphoserine is present on serine 164. The segment at 213-235 adopts a C2H2-type 4 zinc-finger fold; the sequence is YKCSECSQLFQMPADFLEHQATH. The segment at 243 to 305 is disordered; sequence AEEPATQQET…PRRSSSGESG (63 aa). A compositionally biased stretch (basic and acidic residues) spans 273–290; that stretch reads HSYELRNELRNGEAMGRD. At serine 301 the chain carries Phosphoserine. 4 consecutive C2H2-type zinc fingers follow at residues 310–332, 337–359, 365–387, and 393–414; these read LFCS…LRSH, FKCP…LGDH, FLCV…RRAH, and HSCP…RRTH. Residues 417–460 form a disordered region; that stretch reads GGVPLPTTPVPPEEPAISFPEPAPAETGELEAPELPVSEESSAE. 6 consecutive C2H2-type zinc fingers follow at residues 467–490, 496–518, 524–546, 552–574, 580–602, and 608–631; these read YRCL…RFVH, HKCS…LRTH, FPCP…RLTH, YRCG…RLVH, YRCQ…RYHH, and YKCR…LVVH. The C2H2-type 15; degenerate zinc finger occupies 637-660; it reads HRCPSCGAAFPSSLRLREHRCAAA. A C2H2-type 16 zinc finger spans residues 668–690; that stretch reads FECGTCGKKVGSAARLQAHEAAH. The segment at 691–735 is disordered; the sequence is AAAGPGEVLAKEPPAPRAARATRTPVAPSPTALGGTTSAAPAAPA. Low complexity predominate over residues 707–734; that stretch reads RAARATRTPVAPSPTALGGTTSAAPAAP. Serine 719 is modified (phosphoserine). Phosphothreonine is present on threonine 726. 4 C2H2-type zinc fingers span residues 740–762, 768–790, 796–818, and 824–846; these read LECS…RRIH, YPCP…RRLH, FACE…RRIH, and YSCP…RKTH. At arginine 834 the chain carries Asymmetric dimethylarginine.

Belongs to the krueppel C2H2-type zinc-finger protein family.

It localises to the nucleus. In terms of biological role, may be involved in transcriptional regulation. This is Zinc finger protein 574 (Znf574) from Rattus norvegicus (Rat).